Here is a 94-residue protein sequence, read N- to C-terminus: Putative pterin-4-alpha-carbinolamine dehydratase (94 aa).

It belongs to the pterin-4-alpha-carbinolamine dehydratase family.

It carries out the reaction (4aS,6R)-4a-hydroxy-L-erythro-5,6,7,8-tetrahydrobiopterin = (6R)-L-erythro-6,7-dihydrobiopterin + H2O. This is Putative pterin-4-alpha-carbinolamine dehydratase from Mycobacterium tuberculosis (strain ATCC 25177 / H37Ra).